Here is a 246-residue protein sequence, read N- to C-terminus: tRNA (guanine-N(1)-)-methyltransferase (246 aa).

Residues glycine 113 and 133-138 (IGDYVL) contribute to the S-adenosyl-L-methionine site.

Belongs to the RNA methyltransferase TrmD family. Homodimer.

It localises to the cytoplasm. It carries out the reaction guanosine(37) in tRNA + S-adenosyl-L-methionine = N(1)-methylguanosine(37) in tRNA + S-adenosyl-L-homocysteine + H(+). Specifically methylates guanosine-37 in various tRNAs. The polypeptide is tRNA (guanine-N(1)-)-methyltransferase (Yersinia enterocolitica serotype O:8 / biotype 1B (strain NCTC 13174 / 8081)).